Reading from the N-terminus, the 271-residue chain is MERYQQLFKQLAAKKEGAFVPFVQLGDPSPAMSLNIIDTLIAAGADALELGIPFSDPLADGPTIQNAALRAFAAGVTPGICFEILAEIRQKHPTIPIGLLMYANLVFHNGIDHFYQRCAEVGVDSVLIADVPFEESAPFRAAALRHGIAPIFICPPNADDDLLREIASHGRGYTYLLSRAGVTGAENHGQLPLNHLVDKLREYNAAPALQGFGISEPAQVKASLAAGAAGAAGAISGSAIVKIIEKNVAQPVEMLVQLTRFVTEMKAATRS.

Active-site proton acceptor residues include glutamate 49 and aspartate 60.

This sequence belongs to the TrpA family. As to quaternary structure, tetramer of two alpha and two beta chains.

It catalyses the reaction (1S,2R)-1-C-(indol-3-yl)glycerol 3-phosphate + L-serine = D-glyceraldehyde 3-phosphate + L-tryptophan + H2O. It functions in the pathway amino-acid biosynthesis; L-tryptophan biosynthesis; L-tryptophan from chorismate: step 5/5. In terms of biological role, the alpha subunit is responsible for the aldol cleavage of indoleglycerol phosphate to indole and glyceraldehyde 3-phosphate. The polypeptide is Tryptophan synthase alpha chain (Yersinia pestis bv. Antiqua (strain Angola)).